The primary structure comprises 905 residues: Tight junction protein ZO-3 (905 aa).

The 83-residue stretch at 11 to 93 (TATLYKDPRR…TANVTVKRPR (83 aa)) folds into the PDZ 1 domain. A disordered region spans residues 92-167 (PRRVQLPATK…GGGSEANGLD (76 aa)). Ser111 and Ser128 each carry phosphoserine. Low complexity predominate over residues 124-133 (GDSSSGSGRS). The span at 139 to 155 (RRSRAGRRGRVGSHGRR) shows a compositional bias: basic residues. A phosphoserine mark is found at Ser156, Ser157, Ser161, Ser195, and Ser311. One can recognise a PDZ 2 domain in the interval 187–264 (SVLVKRRNSE…ELTLLVLRDS (78 aa)). Residues 289-367 (LTSELSQAPP…QSLEDRGYSP (79 aa)) are disordered. At Thr317 the chain carries Phosphothreonine. Residues Ser319, Ser343, and Ser359 each carry the phosphoserine modification. The 67-residue stretch at 368–434 (DTRVVSFPKG…LTREEAVQFL (67 aa)) folds into the PDZ 3 domain. The 78-residue stretch at 464–541 (GDSFYIRTHF…PNQSRAEQLA (78 aa)) folds into the SH3 domain. The 182-residue stretch at 573-754 (RRGTKKASTQ…WYQEVKAVIQ (182 aa)) folds into the Guanylate kinase-like domain. A Phosphoserine modification is found at Ser584. 2 disordered regions span residues 773–818 (EDLD…PQDV) and 850–905 (TDKW…ATDL). Basic and acidic residues predominate over residues 851–877 (DKWETQADSHYTQDQRRQDSMRTYKHE). Phosphoserine is present on residues Ser891 and Ser892.

Belongs to the MAGUK family. Interacts with occludin OCLN, claudins and TPJ1. Interacts with PATJ. Interacts with UBN1. Interacts with FASLG. Interacts with CCND1. Post-translationally, phosphorylated. In terms of tissue distribution, is concentrated in various types of epithelium, in tissues such as the lung, liver and kidney, but not in endothelium or at cadherin-based cell-cell adhesion sites.

It is found in the cell membrane. Its subcellular location is the cell junction. It localises to the tight junction. The protein localises to the nucleus. Functionally, tjp1, Tjp2, and Tjp3 are closely related scaffolding proteins that link tight junction (TJ) transmembrane proteins such as claudins, junctional adhesion molecules, and occludin to the actin cytoskeleton. The tight junction acts to limit movement of substances through the paracellular space and as a boundary between the compositionally distinct apical and basolateral plasma membrane domains of epithelial and endothelial cells. Binds and recruits PatJ to tight junctions where it connects and stabilizes apical and lateral components of tight junctions. Promotes cell-cycle progression through the sequestration of cyclin D1 (Ccnd1) at tight junctions during mitosis which prevents Ccnd1 degradation during M-phase and enables S-phase transition. With Tjp1 and Tjp2, participates in the junctional retention and stability of the transcription factor DbpA, but is not involved in its shuttling to the nucleus. Contrary to Tjp2, Tjp3 is dispensable for individual viability, embryonic development, epithelial differentiation, and the establishment of TJs, at least in the laboratory environment. The polypeptide is Tight junction protein ZO-3 (Tjp3) (Mus musculus (Mouse)).